A 133-amino-acid polypeptide reads, in one-letter code: Small ribosomal subunit protein eS24y (133 aa).

Positions 104 to 133 (KSRKQIKERKNRAKKIRGVKKTKAGDTKKK) are disordered. The segment covering 109–125 (IKERKNRAKKIRGVKKT) has biased composition (basic residues).

Belongs to the eukaryotic ribosomal protein eS24 family.

This Arabidopsis thaliana (Mouse-ear cress) protein is Small ribosomal subunit protein eS24y (RPS24B).